A 230-amino-acid chain; its full sequence is Ribonuclease 3 (230 aa).

Residues 8–135 enclose the RNase III domain; that stretch reads IVELKEKLGI…LIGAVYLQTN (128 aa). Mg(2+) is bound at residue Glu48. The active site involves Asp52. Mg(2+) is bound by residues Asp121 and Glu124. The active site involves Glu124. Positions 161-230 constitute a DRBM domain; the sequence is DYKTMIQELV…AHFAFQKLSK (70 aa).

This sequence belongs to the ribonuclease III family. As to quaternary structure, homodimer. The cofactor is Mg(2+).

The protein localises to the cytoplasm. The enzyme catalyses Endonucleolytic cleavage to 5'-phosphomonoester.. In terms of biological role, digests double-stranded RNA. Involved in the processing of primary rRNA transcript to yield the immediate precursors to the large and small rRNAs (23S and 16S). Processes some mRNAs, and tRNAs when they are encoded in the rRNA operon. Processes pre-crRNA and tracrRNA of type II CRISPR loci if present in the organism. This chain is Ribonuclease 3, found in Natranaerobius thermophilus (strain ATCC BAA-1301 / DSM 18059 / JW/NM-WN-LF).